We begin with the raw amino-acid sequence, 245 residues long: Ribonuclease PH (245 aa).

Phosphate is bound by residues arginine 86 and 124 to 126 (GTR).

The protein belongs to the RNase PH family. Homohexameric ring arranged as a trimer of dimers.

It catalyses the reaction tRNA(n+1) + phosphate = tRNA(n) + a ribonucleoside 5'-diphosphate. Functionally, phosphorolytic 3'-5' exoribonuclease that plays an important role in tRNA 3'-end maturation. Removes nucleotide residues following the 3'-CCA terminus of tRNAs; can also add nucleotides to the ends of RNA molecules by using nucleoside diphosphates as substrates, but this may not be physiologically important. Probably plays a role in initiation of 16S rRNA degradation (leading to ribosome degradation) during starvation. This Bacillus cytotoxicus (strain DSM 22905 / CIP 110041 / 391-98 / NVH 391-98) protein is Ribonuclease PH.